Here is a 37-residue protein sequence, read N- to C-terminus: Large ribosomal subunit protein bL36 (37 aa).

It belongs to the bacterial ribosomal protein bL36 family.

This is Large ribosomal subunit protein bL36 from Clostridium kluyveri (strain NBRC 12016).